The chain runs to 78 residues: Neurogranin (78 aa).

Residue Met-1 is modified to N-acetylmethionine. Cys-3 and Cys-51 are joined by a disulfide. Residues 26–47 form the IQ domain; that stretch reads ANAAAAKIQASFRGHMARKKIK. Ser-36 is modified (phosphoserine; by PHK and PKC). Positions 39-78 are disordered; sequence GHMARKKIKSGECGRKGPGPGGPGGAGGARGGAGGGPSGD. A Collagen-like domain is found at 48-78; sequence SGECGRKGPGPGGPGGAGGARGGAGGGPSGD. Positions 54–78 are enriched in gly residues; it reads KGPGPGGPGGAGGARGGAGGGPSGD. Arg-68 bears the Citrulline; partial mark. Omega-N-methylarginine is present on Arg-68.

Belongs to the neurogranin family. In terms of assembly, interacts with apo-calmodulin; this interaction decreases the affinity of calmodulin for calcium ions. Disulfide bond formation is redox-sensitive. The cysteine residues are readily oxidized by several nitric acid (NO) donors and other oxidants to form intramolecular disulfide. Cys-51 can form a disulfide with any other of the cysteine residues with an order of reactivity Cys-9 &gt; Cys-4 &gt; Cys-3. In terms of processing, phosphorylated at Ser-36 by PHK and PKC, phosphorylation prevents interaction with Calmodulin and interrupts several learning- and memory-associated functions.

The protein localises to the cytoplasm. It localises to the synapse. Its subcellular location is the cell projection. The protein resides in the dendritic spine. Its function is as follows. Regulates the affinity of calmodulin for calcium. Involved in synaptic plasticity and spatial learning. The sequence is that of Neurogranin (Nrgn) from Mus musculus (Mouse).